Reading from the N-terminus, the 429-residue chain is G2/mitotic-specific cyclin-B1 (429 aa).

Residues 71-114 (TGKVSAKIPPPKPLEKVPPVSEPEVELAETHEPEPVMDEKLSPE) are disordered. N6-acetyllysine is present on Lys-73. Residues 98–112 (AETHEPEPVMDEKLS) are compositionally biased toward basic and acidic residues. Ser-122 is modified (phosphoserine; by CDK1). Position 124 is a phosphoserine (Ser-124). Ser-129 carries the phosphoserine; by PLK1 modification. Position 143 is a phosphoserine (Ser-143). 2 interaction with CDK2 regions span residues 165 to 173 (EYVKDIYAY) and 254 to 257 (YEEM). Phosphothreonine is present on Thr-317.

It belongs to the cyclin family. Cyclin AB subfamily. As to quaternary structure, interacts with the CDC2 protein kinase to form a serine/threonine kinase holoenzyme complex also known as maturation promoting factor (MPF). The cyclin subunit imparts substrate specificity to the complex. Binds HEI10. Interacts with catalytically active RALBP1 and CDC2 during mitosis to form an endocytotic complex during interphase. Interacts with CCNF; interaction is required for nuclear localization. Interacts with CDK5RAP3. Interacts with RFPL4A and UBE2A. Interacts with INCA1. Post-translationally, ubiquitinated by the SCF(NIPA) complex during interphase, leading to its destruction. Not ubiquitinated during G2/M phases. In terms of processing, phosphorylated by PLK1 at Ser-129 on centrosomes during prophase: phosphorylation by PLK1 does not cause nuclear import. Phosphorylation at Ser-143 was also reported to be mediated by PLK1 but Ser-129 seems to be the primary phosphorylation site.

It is found in the cytoplasm. It localises to the nucleus. The protein localises to the cytoskeleton. The protein resides in the microtubule organizing center. Its subcellular location is the centrosome. Its function is as follows. Essential for the control of the cell cycle at the G2/M (mitosis) transition. The chain is G2/mitotic-specific cyclin-B1 (CCNB1) from Mesocricetus auratus (Golden hamster).